A 187-amino-acid chain; its full sequence is UPF0301 protein YqgE (187 aa).

Belongs to the UPF0301 (AlgH) family.

This is UPF0301 protein YqgE from Salmonella agona (strain SL483).